The sequence spans 139 residues: Cell division protein SepF (139 aa).

Belongs to the SepF family. As to quaternary structure, homodimer. Interacts with FtsZ.

It is found in the cytoplasm. Cell division protein that is part of the divisome complex and is recruited early to the Z-ring. Probably stimulates Z-ring formation, perhaps through the cross-linking of FtsZ protofilaments. Its function overlaps with FtsA. In Coprothermobacter proteolyticus (strain ATCC 35245 / DSM 5265 / OCM 4 / BT), this protein is Cell division protein SepF.